The primary structure comprises 421 residues: Glutamate dehydrogenase (421 aa).

Lysine 105 is a catalytic residue. 220 to 226 (GYGNAGY) is an NAD(+) binding site.

It belongs to the Glu/Leu/Phe/Val dehydrogenases family. Homohexamer.

The protein localises to the cytoplasm. The protein resides in the chromosome. The enzyme catalyses L-glutamate + NAD(+) + H2O = 2-oxoglutarate + NH4(+) + NADH + H(+). It carries out the reaction L-glutamate + NADP(+) + H2O = 2-oxoglutarate + NH4(+) + NADPH + H(+). This chain is Glutamate dehydrogenase (gdhA), found in Thermococcus kodakarensis (strain ATCC BAA-918 / JCM 12380 / KOD1) (Pyrococcus kodakaraensis (strain KOD1)).